The primary structure comprises 256 residues: Homeobox-leucine zipper protein HOX18 (256 aa).

The disordered stretch occupies residues 52–117 (YDHGRDEEQA…GGGGGTRKKL (66 aa)). The span at 102–112 (DGGSGSGGGGG) shows a compositional bias: gly residues. Positions 112 to 171 (GTRKKLQLTKEQSTLLEDSFRVHNILSHAQKHELARQLKLKPRQVEVWFQNRRARTKLKQ) form a DNA-binding region, homeobox. Positions 170-214 (KQTEVDCEFLKRCCESLTEENKQLKHELMELRRLASAAAAAAGSQ) are leucine-zipper.

Belongs to the HD-ZIP homeobox family. Class II subfamily. As to expression, expressed in roots, leaf sheaths and blades and panicles.

It localises to the nucleus. Its function is as follows. Probable transcription factor. This Oryza sativa subsp. indica (Rice) protein is Homeobox-leucine zipper protein HOX18 (HOX18).